Reading from the N-terminus, the 858-residue chain is MAAATVGVLLRLLLLPVVVVVSLLVGASRAANVTYDHRAVVIDGVRRVLVSGSIHYPRSTPDMWPGLIQKSKDGGLDVIETYVFWDIHEAVRGQYDFEGRKDLVRFVKAVADAGLYVHLRIGPYVCAEWNYGGFPVWLHFVPGIKFRTDNEAFKAEMQRFTEKVVDTMKGAGLYASQGGPIILSQIENEYGNIDSAYGAAGKAYMRWAAGMAVSLDTGVPWVMCQQSDAPDPLINTCNGFYCDQFTPNSKSKPKMWTENWSGWFLSFGGAVPYRPAEDLAFAVARFYQRGGTFQNYYMYHGGTNFGRSTGGPFIATSYDYDAPIDEYGMVRQPKWGHLRDVHKAIKLCEPALIAAEPSYSSLGQNTEATVYQTADNSICAAFLANVDAQSDKTVKFNGNTYKLPAWSVSILPDCKNVVLNTAQINSQVTTSEMRSLGSSIQDTDDSLITPELATAGWSYAIEPVGITKENALTKPGLMEQINTTADASDFLWYSTSIVVKGDEPYLNGSQSNLLVNSLGHVLQIYINGKLAGSAKGSASSSLISLQTPVTLVPGKNKIDLLSTTVGLSNYGAFFDLVGAGVTGPVKLSGPNGALNLSSTDWTYQIGLRGEDLHLYNPSEASPEWVSDNAYPTNQPLIWYKTKFTAPAGDDPVAIDFTGMGKGEAWVNGQSIGRYWPTNLAPQSGCVNSCNYRGAYSSNKCLKKCGQPSQTLYHVPRSFLQPGSNDLVLFEQFGGDPSMISFTTRQTSSICAHVSEMHPAQIDSWISPQQTSQTQGPALRLECPREGQVISNIKFASFGTPSGTCGNYNHGECSSSQALAVVQEACVGMTNCSVPVSSNNFGDPCSGVTKSLVVEAACS.

The signal sequence occupies residues 1–30 (MAAATVGVLLRLLLLPVVVVVSLLVGASRA). N-linked (GlcNAc...) asparagine glycosylation is present at Asn32. Glu189 serves as the catalytic Proton donor. The active-site Nucleophile is the Glu258. N-linked (GlcNAc...) asparagine glycans are attached at residues Asn259, Asn482, Asn507, Asn595, and Asn830. Residues 772-858 (QTQGPALRLE…KSLVVEAACS (87 aa)) form the SUEL-type lectin domain.

It belongs to the glycosyl hydrolase 35 family.

Its subcellular location is the secreted. It localises to the extracellular space. The protein resides in the apoplast. It carries out the reaction Hydrolysis of terminal non-reducing beta-D-galactose residues in beta-D-galactosides.. Functionally, releases galactose by hydrolysis of plant cell wall galactose-containing polysaccharides such as galacto-xyloglucan, pectic galactan and galactan (in vitro). This chain is Beta-galactosidase 6, found in Oryza sativa subsp. japonica (Rice).